The primary structure comprises 514 residues: GTPase-activating protein gyp1 (514 aa).

Disordered stretches follow at residues 17–65 and 130–164; these read LWNG…QPPK and LPRM…LHSS. 2 stretches are compositionally biased toward polar residues: residues 18-28 and 135-158; these read WNGSSSATSDP and RSTT…TTSR. The Rab-GAP TBC domain occupies 216–443; sequence GIPSEHRPIV…RMWDTYMAEG (228 aa).

It localises to the golgi apparatus. The protein localises to the golgi stack. Its subcellular location is the cytoplasm. It is found in the nucleus. In terms of biological role, stimulates specifically the GTPase activity of ypt1. Functions on the Golgi as a negative regulator of ypt1. The protein is GTPase-activating protein gyp1 of Schizosaccharomyces pombe (strain 972 / ATCC 24843) (Fission yeast).